We begin with the raw amino-acid sequence, 236 residues long: MSFIVEKINCNSLPLKRKTRFAAGHDVYTPYDVVFEVGQTEAKVYTNLVVKSVPEGCAIIVAGRSGLMHGNGMRAIDDEITVGSEDELIITLTRKTGLDKRVVLKSETRVAQIIADTTQDVKLVELPISTYGLDVNHGDVPVYKFNTHWRLEAMPWLRDYQGNRNEVYLRLKSEHFNGIIDPDYKGDIIYMSETPFERLDELYVEVRQFSGETYLGGESPDNVVRGEGGFGSTGGH.

Residues 217–236 (GESPDNVVRGEGGFGSTGGH) form a disordered region. Positions 226–236 (GEGGFGSTGGH) are enriched in gly residues.

This is an uncharacterized protein from Ostreid herpesvirus 1 (isolate France) (OsHV-1).